Reading from the N-terminus, the 278-residue chain is Protein lyl-1 (278 aa).

The tract at residues 1 to 46 (MCPPQARAEVGSAMTEKTEMVCASSPAPAPPSKPASPGPLSTEEVD) is disordered. The span at 27 to 37 (APAPPSKPASP) shows a compositional bias: pro residues. The bHLH domain maps to 149-201 (ARRVFTNSRERWRQQHVNGAFAELRKLLPTHPPDRKLSKNEVLRLAMKYIGFL). The disordered stretch occupies residues 212 to 278 (LTSGPSAPGS…EQTSLSPEVR (67 aa)). The segment covering 269–278 (EQTSLSPEVR) has biased composition (polar residues). S274 bears the Phosphoserine mark.

Efficient DNA binding requires dimerization with another bHLH protein.

It localises to the nucleus. This Mus musculus (Mouse) protein is Protein lyl-1 (Lyl1).